The primary structure comprises 693 residues: Kinesin-like protein KIFC1 (693 aa).

Disordered stretches follow at residues 1–24 and 48–156; these read MRGRGSRDTGTQSAAFASRPVRTT and VKSS…KRPA. Low complexity-rich tracts occupy residues 49–59 and 127–138; these read KSSSRLPLPGS and QKPAPAAPAQKP. Ser-52 and Ser-59 each carry phosphoserine. The stretch at 165-334 forms a coiled coil; sequence DLHEELKQYR…QELKGNIRVF (170 aa). The Kinesin motor domain maps to 330–683; that stretch reads NIRVFCRVRP…LRFASKVNQC (354 aa). Thr-379 is modified (phosphothreonine). 430–437 lines the ATP pocket; the sequence is GQTGSGKT.

Belongs to the TRAFAC class myosin-kinesin ATPase superfamily. Kinesin family. NCD subfamily. Binds NUBP1 and NUBP2. Interacts with PPP1R42.

The protein localises to the nucleus. Its subcellular location is the cytoplasm. It localises to the cytoskeleton. It is found in the microtubule organizing center. The protein resides in the centrosome. The protein localises to the spindle. Its subcellular location is the early endosome. Functionally, minus end-directed microtubule-dependent motor required for bipolar spindle formation. May contribute to movement of early endocytic vesicles. Regulates cilium formation and structure. This Rattus norvegicus (Rat) protein is Kinesin-like protein KIFC1.